A 130-amino-acid polypeptide reads, in one-letter code: Ribosome-binding factor A (130 aa).

Belongs to the RbfA family. In terms of assembly, monomer. Binds 30S ribosomal subunits, but not 50S ribosomal subunits or 70S ribosomes.

Its subcellular location is the cytoplasm. In terms of biological role, one of several proteins that assist in the late maturation steps of the functional core of the 30S ribosomal subunit. Associates with free 30S ribosomal subunits (but not with 30S subunits that are part of 70S ribosomes or polysomes). Required for efficient processing of 16S rRNA. May interact with the 5'-terminal helix region of 16S rRNA. The protein is Ribosome-binding factor A of Methylibium petroleiphilum (strain ATCC BAA-1232 / LMG 22953 / PM1).